A 349-amino-acid chain; its full sequence is Mitomycin biosynthesis 6-O-methyltransferase (349 aa).

Residues Ser167, Gly190, Glu213–Arg214, Asp240–Phe241, and Lys255 each bind S-adenosyl-L-methionine. His259 serves as the catalytic Proton acceptor. Asn288 contributes to the substrate binding site.

This sequence belongs to the class I-like SAM-binding methyltransferase superfamily. Cation-independent O-methyltransferase family. COMT subfamily. In terms of assembly, homodimer.

It catalyses the reaction 6-demethylmitomycin A + S-adenosyl-L-methionine = mitomycin A + S-adenosyl-L-homocysteine. The catalysed reaction is 6-demethylmitomycin B + S-adenosyl-L-methionine = mitomycin B + S-adenosyl-L-homocysteine. Its activity is regulated as follows. Completely inhibited by Zn(2+) and Cu(2+). In terms of biological role, involved in the biosynthesis of the quinone methoxy group present in the mitomycin A and B, which are used as anticancer agents. In vitro, catalyzes the 6-O-methylation of both C9-beta- and C9-alpha-configured 6-hydroxymitomycins via the transfer of the S-methyl group of S-adenosyl-L-methionine (AdoMet) to the 6-demethylmitomycin A and B. It can also use hydroxyquinone as substrate. This Streptomyces lavendulae protein is Mitomycin biosynthesis 6-O-methyltransferase.